Reading from the N-terminus, the 217-residue chain is Casparian strip membrane protein 6 (217 aa).

The Cytoplasmic portion of the chain corresponds to 1-57 (MEEAKHIEAVEAKQIEAEEAQRIKAGEAKQIEAGETSRSSRKVITFEPKLVINKGIS). A helical membrane pass occupies residues 58-78 (VLGFVLRLFAVFGTIGSALAM). The Extracellular portion of the chain corresponds to 79–103 (GTTHESVVSLSQLVLLKVKYSDLPT). A helical transmembrane segment spans residues 104 to 124 (LMFFVVANAIAGGYLVLSLPV). The Cytoplasmic segment spans residues 125 to 138 (SIFHIFSTKAKTSR). A helical membrane pass occupies residues 139–159 (IILLVIDTVMLALVSSGASAA). At 160–191 (TATVYLAHEGNTTANWPPICQQFDGFCERISG) the chain is on the extracellular side. Asn170 carries an N-linked (GlcNAc...) asparagine glycan. A helical transmembrane segment spans residues 192 to 212 (SLIGSFCAVILLMLIVINSAI). Topologically, residues 213-217 (SLSRH) are cytoplasmic.

This sequence belongs to the Casparian strip membrane proteins (CASP) family. In terms of assembly, homodimer and heterodimers.

It localises to the cell membrane. Its function is as follows. Regulates membrane-cell wall junctions and localized cell wall deposition. Required for establishment of the Casparian strip membrane domain (CSD) and the subsequent formation of Casparian strips, a cell wall modification of the root endodermis that determines an apoplastic barrier between the intraorganismal apoplasm and the extraorganismal apoplasm and prevents lateral diffusion. In Arabidopsis lyrata subsp. lyrata (Lyre-leaved rock-cress), this protein is Casparian strip membrane protein 6.